Here is a 251-residue protein sequence, read N- to C-terminus: Aliphatic sulfonates import ATP-binding protein SsuB (251 aa).

An ABC transporter domain is found at 3–231 (VSIDGVSKYF…PRSKTSESFQ (229 aa)). 39–46 (GPSGCGKS) lines the ATP pocket.

This sequence belongs to the ABC transporter superfamily. Aliphatic sulfonates importer (TC 3.A.1.17.2) family. As to quaternary structure, the complex is composed of two ATP-binding proteins (SsuB), two transmembrane proteins (SsuC) and a solute-binding protein (SsuA).

The protein resides in the cell membrane. It carries out the reaction ATP + H2O + aliphatic sulfonate-[sulfonate-binding protein]Side 1 = ADP + phosphate + aliphatic sulfonateSide 2 + [sulfonate-binding protein]Side 1.. Its function is as follows. Part of the ABC transporter complex SsuABC involved in aliphatic sulfonates import. Responsible for energy coupling to the transport system. This is Aliphatic sulfonates import ATP-binding protein SsuB from Bacillus cereus (strain ATCC 10987 / NRS 248).